Reading from the N-terminus, the 204-residue chain is Methylthioribulose-1-phosphate dehydratase (204 aa).

His94 and His96 together coordinate Zn(2+).

Belongs to the aldolase class II family. MtnB subfamily. Requires Zn(2+) as cofactor.

It catalyses the reaction 5-(methylsulfanyl)-D-ribulose 1-phosphate = 5-methylsulfanyl-2,3-dioxopentyl phosphate + H2O. It functions in the pathway amino-acid biosynthesis; L-methionine biosynthesis via salvage pathway; L-methionine from S-methyl-5-thio-alpha-D-ribose 1-phosphate: step 2/6. Catalyzes the dehydration of methylthioribulose-1-phosphate (MTRu-1-P) into 2,3-diketo-5-methylthiopentyl-1-phosphate (DK-MTP-1-P). The chain is Methylthioribulose-1-phosphate dehydratase from Pseudomonas syringae pv. syringae (strain B728a).